The chain runs to 356 residues: S-adenosylmethionine:tRNA ribosyltransferase-isomerase (356 aa).

The protein belongs to the QueA family. In terms of assembly, monomer.

Its subcellular location is the cytoplasm. It catalyses the reaction 7-aminomethyl-7-carbaguanosine(34) in tRNA + S-adenosyl-L-methionine = epoxyqueuosine(34) in tRNA + adenine + L-methionine + 2 H(+). The protein operates within tRNA modification; tRNA-queuosine biosynthesis. Transfers and isomerizes the ribose moiety from AdoMet to the 7-aminomethyl group of 7-deazaguanine (preQ1-tRNA) to give epoxyqueuosine (oQ-tRNA). The polypeptide is S-adenosylmethionine:tRNA ribosyltransferase-isomerase (Chromohalobacter salexigens (strain ATCC BAA-138 / DSM 3043 / CIP 106854 / NCIMB 13768 / 1H11)).